We begin with the raw amino-acid sequence, 95 residues long: Large ribosomal subunit protein bL25 (95 aa).

This sequence belongs to the bacterial ribosomal protein bL25 family. Part of the 50S ribosomal subunit; part of the 5S rRNA/L5/L18/L25 subcomplex. Contacts the 5S rRNA. Binds to the 5S rRNA independently of L5 and L18.

In terms of biological role, this is one of the proteins that binds to the 5S RNA in the ribosome where it forms part of the central protuberance. This Haemophilus influenzae (strain ATCC 51907 / DSM 11121 / KW20 / Rd) protein is Large ribosomal subunit protein bL25.